The primary structure comprises 289 residues: Pantoate kinase (289 aa).

It belongs to the GHMP kinase family. PoK subfamily.

It catalyses the reaction (R)-pantoate + ATP = (R)-4-phosphopantoate + ADP + H(+). It participates in cofactor biosynthesis; coenzyme A biosynthesis. Functionally, phosphorylates (R)-pantoate to form (R)-4-phosphopantoate in the CoA biosynthesis pathway. ATP is the best phosphate donor. Can be replaced with UTP, with lower efficiency. This is Pantoate kinase from Methanospirillum hungatei JF-1 (strain ATCC 27890 / DSM 864 / NBRC 100397 / JF-1).